A 209-amino-acid chain; its full sequence is Thymidylate kinase (209 aa).

13-20 contributes to the ATP binding site; it reads GLEGAGKS.

This sequence belongs to the thymidylate kinase family.

It carries out the reaction dTMP + ATP = dTDP + ADP. In terms of biological role, phosphorylation of dTMP to form dTDP in both de novo and salvage pathways of dTTP synthesis. This is Thymidylate kinase from Shewanella sp. (strain MR-4).